The sequence spans 304 residues: Putative ankyrin repeat protein R602 (304 aa).

ANK repeat units follow at residues 82-117 (LIRYILYIAYQNHHQDCSVYYEMIKYLIDYGLDITF), 118-146 (NDNFAIKLASLCHENILKLVIDNGGDVHA), 147-176 (DNEFPICLAANHGRLSCVKLLVDCGVDPFC), 178-206 (DNIVIKLASIDYYDNVVEYMVSIGADINA), 207-236 (GNNYVLRYAIKNLDKKMIELAINAGASIND), and 238-266 (SPNDITHIIKYQSPTIMNILVEYGLDIST).

This chain is Putative ankyrin repeat protein R602, found in Acanthamoeba polyphaga (Amoeba).